The chain runs to 174 residues: Probasin (174 aa).

Positions 1–18 (MMRVIILLLTLHVLGVSS) are cleaved as a signal peptide. Residues Cys-77 and Cys-168 are joined by a disulfide bond.

It belongs to the calycin superfamily. Lipocalin family.

The protein localises to the secreted. This is Probasin (Pbsn) from Mus musculus (Mouse).